A 526-amino-acid chain; its full sequence is Lycopene epsilon cyclase, chloroplastic (526 aa).

108-136 (LVVIGCGPAGLALAAESAKLGLNVGLVGP) is an NAD(+) binding site. The next 2 helical transmembrane spans lie at 443-463 (FFLFGLALILQLDIEGIRSFF) and 477-497 (FLGSSLSSADLMLFAFYMFII).

It belongs to the lycopene cyclase family.

It localises to the plastid. Its subcellular location is the chloroplast membrane. It catalyses the reaction a carotenoid psi-end group = a carotenoid epsilon-end group. It functions in the pathway carotenoid biosynthesis; alpha-zeacarotene biosynthesis. The protein operates within carotenoid biosynthesis; delta-carotene biosynthesis. Functionally, catalyzes the single cyclization reaction which converts lycopene to delta-carotene and neurosporene to alpha-zeacarotene. Required for lutein biosynthesis. The chain is Lycopene epsilon cyclase, chloroplastic from Solanum lycopersicum (Tomato).